The sequence spans 190 residues: Glutathione peroxidase 2 (190 aa).

Selenocysteine 40 is an active-site residue. Residue selenocysteine 40 is a non-standard amino acid, selenocysteine.

It belongs to the glutathione peroxidase family. Homotetramer.

It is found in the cytoplasm. Its subcellular location is the cytosol. It catalyses the reaction 2 glutathione + H2O2 = glutathione disulfide + 2 H2O. The enzyme catalyses a hydroperoxy polyunsaturated fatty acid + 2 glutathione = a hydroxy polyunsaturated fatty acid + glutathione disulfide + H2O. It carries out the reaction tert-butyl hydroperoxide + 2 glutathione = tert-butanol + glutathione disulfide + H2O. The catalysed reaction is cumene hydroperoxide + 2 glutathione = 2-phenylpropan-2-ol + glutathione disulfide + H2O. It catalyses the reaction (13S)-hydroperoxy-(9Z,11E)-octadecadienoate + 2 glutathione = (13S)-hydroxy-(9Z,11E)-octadecadienoate + glutathione disulfide + H2O. The enzyme catalyses (5S)-hydroperoxy-(6E,8Z,11Z,14Z)-eicosatetraenoate + 2 glutathione = (5S)-hydroxy-(6E,8Z,11Z,14Z)-eicosatetraenoate + glutathione disulfide + H2O. It carries out the reaction (12R)-hydroperoxy-(5Z,8Z,10E,14Z)-eicosatetraenoate + 2 glutathione = (12R)-hydroxy-(5Z,8Z,10E,14Z)-eicosatetraenoate + glutathione disulfide + H2O. The catalysed reaction is (15S)-hydroperoxy-(5Z,8Z,11Z,13E)-eicosatetraenoate + 2 glutathione = (15S)-hydroxy-(5Z,8Z,11Z,13E)-eicosatetraenoate + glutathione disulfide + H2O. Functionally, catalyzes the reduction of hydroperoxides in a glutathione-dependent manner thus regulating cellular redox homeostasis. Can reduce small soluble hydroperoxides such as H2O2, cumene hydroperoxide and tert-butyl hydroperoxide, as well as several fatty acid-derived hydroperoxides. Cannot reduce phosphatidycholine hydroperoxide. This chain is Glutathione peroxidase 2 (GPX2), found in Callithrix jacchus (White-tufted-ear marmoset).